Reading from the N-terminus, the 187-residue chain is Peptidyl-tRNA hydrolase (187 aa).

Position 15 (tyrosine 15) interacts with tRNA. The active-site Proton acceptor is the histidine 20. TRNA contacts are provided by phenylalanine 64, asparagine 66, and asparagine 112.

It belongs to the PTH family. In terms of assembly, monomer.

The protein resides in the cytoplasm. The catalysed reaction is an N-acyl-L-alpha-aminoacyl-tRNA + H2O = an N-acyl-L-amino acid + a tRNA + H(+). Functionally, hydrolyzes ribosome-free peptidyl-tRNAs (with 1 or more amino acids incorporated), which drop off the ribosome during protein synthesis, or as a result of ribosome stalling. Its function is as follows. Catalyzes the release of premature peptidyl moieties from peptidyl-tRNA molecules trapped in stalled 50S ribosomal subunits, and thus maintains levels of free tRNAs and 50S ribosomes. The polypeptide is Peptidyl-tRNA hydrolase (Bacteroides fragilis (strain ATCC 25285 / DSM 2151 / CCUG 4856 / JCM 11019 / LMG 10263 / NCTC 9343 / Onslow / VPI 2553 / EN-2)).